Here is a 442-residue protein sequence, read N- to C-terminus: Trigger factor (442 aa).

Positions 176–259 (GDFISLSLYV…VNAVIEISSP (84 aa)) constitute a PPIase FKBP-type domain.

The protein belongs to the FKBP-type PPIase family. Tig subfamily.

The protein localises to the cytoplasm. It catalyses the reaction [protein]-peptidylproline (omega=180) = [protein]-peptidylproline (omega=0). In terms of biological role, involved in protein export. Acts as a chaperone by maintaining the newly synthesized protein in an open conformation. Functions as a peptidyl-prolyl cis-trans isomerase. The polypeptide is Trigger factor (Chlamydia trachomatis serovar A (strain ATCC VR-571B / DSM 19440 / HAR-13)).